A 508-amino-acid chain; its full sequence is Citrate lyase alpha chain (508 aa).

In terms of assembly, oligomer with a subunit composition of (alpha,beta,gamma)6.

The protein localises to the cytoplasm. The enzyme catalyses citrate = oxaloacetate + acetate. The catalysed reaction is citrate + acetyl-CoA = (3S)-citryl-CoA + acetate. Functionally, represents a citrate:acetyl-ACP transferase. This is Citrate lyase alpha chain (citF) from Klebsiella pneumoniae.